The chain runs to 268 residues: MKRIALLVQYDGSNYSGWQRQKNATTVQETLERALFKITHQVVKTFAAGRTDAGVHASGQVVHFNIDCVIPANSYSDILNGLLPSAIRILESVEVKDSWHSCYSAMYRHYRYVINNSKFPNLFINNWSWHRYQKILDEVLMSNASKLMEGEHDFFAFQKSGSQRKNSITKIKNVEIKRVEDLILVDIKATGFLYGMVRLIVGQLVLVGEKKISPEIFTDIWVNQKKNDVKESAPAKGLCFVNAVYEENVFKKINNNDFFPVFLIKGFS.

Aspartate 52 functions as the Nucleophile in the catalytic mechanism. A substrate-binding site is contributed by tyrosine 110.

The protein belongs to the tRNA pseudouridine synthase TruA family. Homodimer.

It catalyses the reaction uridine(38/39/40) in tRNA = pseudouridine(38/39/40) in tRNA. In terms of biological role, formation of pseudouridine at positions 38, 39 and 40 in the anticodon stem and loop of transfer RNAs. This Prochlorococcus marinus (strain MIT 9312) protein is tRNA pseudouridine synthase A.